The chain runs to 223 residues: Phosphoribosylformylglycinamidine synthase subunit PurQ (223 aa).

The 221-residue stretch at 3-223 (SAVVQLPGLN…FASALDVIAA (221 aa)) folds into the Glutamine amidotransferase type-1 domain. Cys-86 acts as the Nucleophile in catalysis. Catalysis depends on residues His-196 and Glu-198.

In terms of assembly, part of the FGAM synthase complex composed of 1 PurL, 1 PurQ and 2 PurS subunits.

It is found in the cytoplasm. The catalysed reaction is N(2)-formyl-N(1)-(5-phospho-beta-D-ribosyl)glycinamide + L-glutamine + ATP + H2O = 2-formamido-N(1)-(5-O-phospho-beta-D-ribosyl)acetamidine + L-glutamate + ADP + phosphate + H(+). It carries out the reaction L-glutamine + H2O = L-glutamate + NH4(+). It participates in purine metabolism; IMP biosynthesis via de novo pathway; 5-amino-1-(5-phospho-D-ribosyl)imidazole from N(2)-formyl-N(1)-(5-phospho-D-ribosyl)glycinamide: step 1/2. Functionally, part of the phosphoribosylformylglycinamidine synthase complex involved in the purines biosynthetic pathway. Catalyzes the ATP-dependent conversion of formylglycinamide ribonucleotide (FGAR) and glutamine to yield formylglycinamidine ribonucleotide (FGAM) and glutamate. The FGAM synthase complex is composed of three subunits. PurQ produces an ammonia molecule by converting glutamine to glutamate. PurL transfers the ammonia molecule to FGAR to form FGAM in an ATP-dependent manner. PurS interacts with PurQ and PurL and is thought to assist in the transfer of the ammonia molecule from PurQ to PurL. This is Phosphoribosylformylglycinamidine synthase subunit PurQ from Rhizobium johnstonii (strain DSM 114642 / LMG 32736 / 3841) (Rhizobium leguminosarum bv. viciae).